We begin with the raw amino-acid sequence, 261 residues long: Immediate-early protein IE-0 (261 aa).

The RING-type zinc finger occupies 212 to 257 (CNVCKEISTDERFLKPKECCEYAICNACCVNMWKTATTHAKCPACR).

In terms of assembly, interacts with proteins C42 and FP25. Interacts with host beta-tubulin. Interacts with Ac66 and vUb.

It localises to the host nucleus. It is found in the host cytoplasm. Its subcellular location is the virion. Functionally, putative viral E3 ligase that plays an essential regulatory role in both viral DNA replication and transcriptional transactivation. The role in transcription has been shown to include activation of gene expression from early viral promoters. Also promotes the efficient egress of nucleocapsids from the host nucleus. May act as an E3 ligase that promotes ubiquitination of nucleocapsids proteins by vUbi and subsequent viral egress for the host nucleus. This chain is Immediate-early protein IE-0 (IE0), found in Lepidoptera (butterflies and moths).